Consider the following 546-residue polypeptide: Cytochrome P450 monooxygenase fumoB (546 aa).

The chain crosses the membrane as a helical span at residues 13 to 33 (LGYYEKLAGILGIIGLVLLFW). A glycan (N-linked (GlcNAc...) asparagine) is linked at Asn-147. Cys-488 contributes to the heme binding site.

This sequence belongs to the cytochrome P450 family. Heme is required as a cofactor.

It localises to the membrane. Its pathway is secondary metabolite biosynthesis. Functionally, cytochrome P450 monooxygenase; part of the gene cluster that mediates the biosynthesis of fumosorinone, a 2-pyridone alkaloid that acts as an inhibitor of protein tyrosine phosphatase 1B which is implicated asa negative regulator of insulin receptor signaling and a potential drug target for the treatment of type II diabetes and other associated metabolic syndromes. The polyketide-amino acid backbone of fumosorinone is first assembled by the PKS-NRPS hybrid fumoS. The PKS modules condense one acetyl-CoA starter unit with 7 malonyl-CoA units, programmed C-methylations occurring after the first 3 and the sixth extensions, and cycles of full reduction occurring after the first 2 extensions. Because fumoS lacks a designated enoyl reductase (ER) domain, the required activity is provided the enoyl reductase fumoC. Upon formation of the polyketide backbone on the thiotemplate, the polyketide is transferred to the NRPS module and linked to tyrosine to produce the acyltetramic acid intermediate called prefumosorinone A. The cytochrome P450 monooxygenase fumoA then probably catalyzes an unprecedented oxidative ring expansion of prefumosorinone A to form prefumosorinone B which contains the 2-pyridone core of fumosorinone. The cytochrome P450 monooxygenase fumoB might hydroxylate the nitrogen of prefumosorinone B, but not the acyltetramic acid prefumosorinone A, to form fumosorinone. The sequence is that of Cytochrome P450 monooxygenase fumoB from Cordyceps fumosorosea (strain ARSEF 2679) (Isaria fumosorosea).